The chain runs to 280 residues: Elongation factor Ts (280 aa).

Residues 79 to 82 are involved in Mg(2+) ion dislocation from EF-Tu; sequence TDFV.

This sequence belongs to the EF-Ts family.

It localises to the cytoplasm. In terms of biological role, associates with the EF-Tu.GDP complex and induces the exchange of GDP to GTP. It remains bound to the aminoacyl-tRNA.EF-Tu.GTP complex up to the GTP hydrolysis stage on the ribosome. The protein is Elongation factor Ts of Vibrio cholerae serotype O1 (strain ATCC 39541 / Classical Ogawa 395 / O395).